The chain runs to 203 residues: Holliday junction branch migration complex subunit RuvA (203 aa).

The segment at 1–63 (MIVSLRGTVE…EESQTLYGFT (63 aa)) is domain I. A domain II region spans residues 64–142 (DDASRRMFVL…GFNDGIPAAA (79 aa)). The segment at 143-150 (QPQLSIAV) is flexible linker. A domain III region spans residues 150–203 (VDQAVQEQVLEALVGLGFSEKIALPVLSRVLRDSPELSKSQALRAALSELGTKN).

This sequence belongs to the RuvA family. In terms of assembly, homotetramer. Forms an RuvA(8)-RuvB(12)-Holliday junction (HJ) complex. HJ DNA is sandwiched between 2 RuvA tetramers; dsDNA enters through RuvA and exits via RuvB. An RuvB hexamer assembles on each DNA strand where it exits the tetramer. Each RuvB hexamer is contacted by two RuvA subunits (via domain III) on 2 adjacent RuvB subunits; this complex drives branch migration. In the full resolvosome a probable DNA-RuvA(4)-RuvB(12)-RuvC(2) complex forms which resolves the HJ.

Its subcellular location is the cytoplasm. Its function is as follows. The RuvA-RuvB-RuvC complex processes Holliday junction (HJ) DNA during genetic recombination and DNA repair, while the RuvA-RuvB complex plays an important role in the rescue of blocked DNA replication forks via replication fork reversal (RFR). RuvA specifically binds to HJ cruciform DNA, conferring on it an open structure. The RuvB hexamer acts as an ATP-dependent pump, pulling dsDNA into and through the RuvAB complex. HJ branch migration allows RuvC to scan DNA until it finds its consensus sequence, where it cleaves and resolves the cruciform DNA. This chain is Holliday junction branch migration complex subunit RuvA, found in Corynebacterium diphtheriae (strain ATCC 700971 / NCTC 13129 / Biotype gravis).